The chain runs to 209 residues: Ribosomal RNA large subunit methyltransferase E (209 aa).

Residues glycine 63, tryptophan 65, aspartate 83, aspartate 99, and aspartate 124 each contribute to the S-adenosyl-L-methionine site. Lysine 164 acts as the Proton acceptor in catalysis.

It belongs to the class I-like SAM-binding methyltransferase superfamily. RNA methyltransferase RlmE family.

The protein localises to the cytoplasm. The catalysed reaction is uridine(2552) in 23S rRNA + S-adenosyl-L-methionine = 2'-O-methyluridine(2552) in 23S rRNA + S-adenosyl-L-homocysteine + H(+). Its function is as follows. Specifically methylates the uridine in position 2552 of 23S rRNA at the 2'-O position of the ribose in the fully assembled 50S ribosomal subunit. The protein is Ribosomal RNA large subunit methyltransferase E of Klebsiella pneumoniae (strain 342).